We begin with the raw amino-acid sequence, 244 residues long: ATP synthase subunit a (244 aa).

The next 7 membrane-spanning stretches (helical) occupy residues 20–40, 81–101, 113–133, 140–160, 176–196, 202–222, and 223–243; these read FFDV…VIVI, GILF…LNVM, QLLV…IWGF, FLNI…LVFI, LFAN…AAIY, FIGI…LGIA, and FLQA…IINL.

Belongs to the ATPase A chain family. As to quaternary structure, F-type ATPases have 2 components, CF(1) - the catalytic core - and CF(0) - the membrane proton channel. CF(1) has five subunits: alpha(3), beta(3), gamma(1), delta(1), epsilon(1). CF(0) has three main subunits: a, b and c.

Its subcellular location is the mitochondrion inner membrane. Functionally, mitochondrial membrane ATP synthase (F(1)F(0) ATP synthase or Complex V) produces ATP from ADP in the presence of a proton gradient across the membrane which is generated by electron transport complexes of the respiratory chain. F-type ATPases consist of two structural domains, F(1) - containing the extramembraneous catalytic core and F(0) - containing the membrane proton channel, linked together by a central stalk and a peripheral stalk. During catalysis, ATP synthesis in the catalytic domain of F(1) is coupled via a rotary mechanism of the central stalk subunits to proton translocation. Key component of the proton channel; it may play a direct role in the translocation of protons across the membrane. The chain is ATP synthase subunit a (atp6) from Dictyostelium citrinum (Slime mold).